A 1045-amino-acid polypeptide reads, in one-letter code: Putative sodium-coupled neutral amino acid transporter 10 (1045 aa).

A run of 10 helical transmembrane segments spans residues 8–28, 33–53, 85–105, 117–137, 150–170, 226–246, 269–289, 320–340, 342–362, and 375–395; these read LIMN…PFCF, ILLG…SCMF, SMIG…GDLG, VSEG…VLPL, FSAM…LSSF, IFAL…FFGY, MIRV…ILPC, ILTL…PNVE, ILGL…PALI, and FILG…LTVT. Basic and acidic residues-rich tracts occupy residues 412–453, 460–479, and 503–546; these read KEEK…EEQI, PQKE…RPDQ, and VDEK…DQAE. Disordered regions lie at residues 412–584 and 606–658; these read KEEK…EQPP and EIAE…AEAG. Residues 564–573 are compositionally biased toward polar residues; it reads NDPNKQQLVN. Residues 627–658 show a composition bias toward basic and acidic residues; the sequence is PIKDEKNEQIPGDPGKESHVEPKAEDNQAEAG.

This sequence belongs to the amino acid/polyamine transporter 2 family.

It is found in the membrane. Putative sodium-dependent amino acid/proton antiporter. In Xenopus laevis (African clawed frog), this protein is Putative sodium-coupled neutral amino acid transporter 10 (slc38a10).